The chain runs to 233 residues: Glycolipid transfer protein 3 (233 aa).

Positions 79, 83, 126, and 165 each coordinate a ganglioside GM3 (d18:1(4E)).

This sequence belongs to the GLTP family.

May be involved in glycolipids transfer. In Arabidopsis thaliana (Mouse-ear cress), this protein is Glycolipid transfer protein 3.